Here is a 133-residue protein sequence, read N- to C-terminus: Large ribosomal subunit protein uL22 (133 aa).

This sequence belongs to the universal ribosomal protein uL22 family. In terms of assembly, part of the 50S ribosomal subunit.

Its function is as follows. This protein binds specifically to 23S rRNA; its binding is stimulated by other ribosomal proteins, e.g. L4, L17, and L20. It is important during the early stages of 50S assembly. It makes multiple contacts with different domains of the 23S rRNA in the assembled 50S subunit and ribosome. In terms of biological role, the globular domain of the protein is located near the polypeptide exit tunnel on the outside of the subunit, while an extended beta-hairpin is found that lines the wall of the exit tunnel in the center of the 70S ribosome. The chain is Large ribosomal subunit protein uL22 from Aquifex pyrophilus.